Reading from the N-terminus, the 492-residue chain is MTATSGKLMKGATGDWEVVIGMEIHAQVTSKSKLFSGASTAFGGDPNSHVSLVDVAMPGMLPVINEECVRQAVRTGLGLNAKINLRSVFDRKNYFYPDLPQGYQISQYKDPIVGEGEVTVELDGGKTATIGIERLHLEQDPGKMLHDQSPSLSYIDYNRCGVALMEIVSKPDIRDAEQAKAYVTKLRSILRYLGTCDGDMEKGSLRADVNVSVRKPGGPLGTRCEIKNINSISFIGQAVEAEARRQIEIIEDGGTIEQETRRFDPDKGETRSMRSKEEAHDYRYFPDPDLLPLEFDQAFVDALKAALPELPDQKKARFIADFGLSPYDASVLVAERESAAFYESVLEALSDRGRDGKLAANWVINELFGRLNKEGRDIASSPVSSAQLAAIVALIGEGTISGKIAKDLFEIVWSEGGDPRELVESRGMKQVTDLGAIEKVVDEIIAANPDKVAQAKAKPQLAGWFVGQVMKSSGGKANPQAVNDLLKSKLGI.

Belongs to the GatB/GatE family. GatB subfamily. Heterotrimer of A, B and C subunits.

The enzyme catalyses L-glutamyl-tRNA(Gln) + L-glutamine + ATP + H2O = L-glutaminyl-tRNA(Gln) + L-glutamate + ADP + phosphate + H(+). It catalyses the reaction L-aspartyl-tRNA(Asn) + L-glutamine + ATP + H2O = L-asparaginyl-tRNA(Asn) + L-glutamate + ADP + phosphate + 2 H(+). In terms of biological role, allows the formation of correctly charged Asn-tRNA(Asn) or Gln-tRNA(Gln) through the transamidation of misacylated Asp-tRNA(Asn) or Glu-tRNA(Gln) in organisms which lack either or both of asparaginyl-tRNA or glutaminyl-tRNA synthetases. The reaction takes place in the presence of glutamine and ATP through an activated phospho-Asp-tRNA(Asn) or phospho-Glu-tRNA(Gln). This is Aspartyl/glutamyl-tRNA(Asn/Gln) amidotransferase subunit B from Bradyrhizobium sp. (strain BTAi1 / ATCC BAA-1182).